The chain runs to 123 residues: UPF0738 protein Bcer98_0913 (123 aa).

It belongs to the UPF0738 family.

This is UPF0738 protein Bcer98_0913 from Bacillus cytotoxicus (strain DSM 22905 / CIP 110041 / 391-98 / NVH 391-98).